Here is a 377-residue protein sequence, read N- to C-terminus: Nitric oxide reductase FlRd-NAD(+) reductase (377 aa).

This sequence belongs to the FAD-dependent oxidoreductase family. It depends on FAD as a cofactor.

The protein resides in the cytoplasm. The catalysed reaction is 2 reduced [nitric oxide reductase rubredoxin domain] + NAD(+) + H(+) = 2 oxidized [nitric oxide reductase rubredoxin domain] + NADH. It functions in the pathway nitrogen metabolism; nitric oxide reduction. Its function is as follows. One of at least two accessory proteins for anaerobic nitric oxide (NO) reductase. Reduces the rubredoxin moiety of NO reductase. This Shigella sonnei (strain Ss046) protein is Nitric oxide reductase FlRd-NAD(+) reductase.